A 358-amino-acid polypeptide reads, in one-letter code: Protein RecA (358 aa).

An ATP-binding site is contributed by 66–73; sequence GPESSGKT.

The protein belongs to the RecA family.

It localises to the cytoplasm. Can catalyze the hydrolysis of ATP in the presence of single-stranded DNA, the ATP-dependent uptake of single-stranded DNA by duplex DNA, and the ATP-dependent hybridization of homologous single-stranded DNAs. It interacts with LexA causing its activation and leading to its autocatalytic cleavage. The polypeptide is Protein RecA (Herpetosiphon aurantiacus (strain ATCC 23779 / DSM 785 / 114-95)).